The sequence spans 315 residues: MSIPEVGKKIRVTVPSTTANLGPGFDCLGAALDLHNEFIFTRIEGGGDRFDLIMESTDGNHLRGGPENLVFRAAQKVWESANMEPFALEARVKLAVPPARGLGSSATAIVAGLIGANAIMNSPLPKEKLLELAIDIEGHPDNVVPSLLGGLCLTARSSSQRWRIIRCDWHDSIKAVVAIPAIRLSTSEARKVMPKNVPISDAVTNMGALTLLLNGLKAGNDELIKEGMFDKLHEPYRWKLIKGGLEVKDAALQAGALGCAISGAGPSILALCKKENGKEVSQAMVKAWEKSGVASRAPFLNLQTTGSQFSTISSR.

Residue 97–107 (PPARGLGSSAT) coordinates ATP.

The protein belongs to the GHMP kinase family. Homoserine kinase subfamily.

The protein localises to the cytoplasm. It carries out the reaction L-homoserine + ATP = O-phospho-L-homoserine + ADP + H(+). It functions in the pathway amino-acid biosynthesis; L-threonine biosynthesis; L-threonine from L-aspartate: step 4/5. Its function is as follows. Catalyzes the ATP-dependent phosphorylation of L-homoserine to L-homoserine phosphate. The sequence is that of Homoserine kinase from Prochlorococcus marinus (strain MIT 9312).